The chain runs to 175 residues: NADH dehydrogenase [ubiquinone] iron-sulfur protein 4, mitochondrial (175 aa).

The transit peptide at 1-42 (MAAVSMSVVLRQTLWRRRAVAVAALSVSRVPTRSLRTSTWRL) directs the protein to the mitochondrion. The disordered stretch occupies residues 149–175 (ERKVPKPKSKSYGANFSWNKRTRVSTK).

The protein belongs to the complex I NDUFS4 subunit family. As to quaternary structure, mammalian complex I is composed of 45 different subunits. This is a component of the iron-sulfur (IP) fragment of the enzyme. Interacts with BCAP31 and TOMM40; the interaction mediates its translocation to the mitochondria; the interaction with BCAP31 is direct.

The protein localises to the mitochondrion inner membrane. Functionally, accessory subunit of the mitochondrial membrane respiratory chain NADH dehydrogenase (Complex I), that is believed not to be involved in catalysis. Complex I functions in the transfer of electrons from NADH to the respiratory chain. The immediate electron acceptor for the enzyme is believed to be ubiquinone. The chain is NADH dehydrogenase [ubiquinone] iron-sulfur protein 4, mitochondrial (NDUFS4) from Pan troglodytes (Chimpanzee).